Here is a 980-residue protein sequence, read N- to C-terminus: Putative formate dehydrogenase YrhE (980 aa).

In terms of domain architecture, 2Fe-2S ferredoxin-type spans 5 to 81; it reads KSISVRVDGT…GMSIDLSGNR (77 aa). [2Fe-2S] cluster is bound by residues Cys39, Cys50, Cys53, and Cys65. In terms of domain architecture, 4Fe-4S His(Cys)3-ligated-type spans 81-121; the sequence is RVKEAQTEAMDRLLENHLLYCTVCDNNNGNCTLHNTAEMMG. [4Fe-4S] cluster contacts are provided by His97, Cys101, Cys104, Cys111, Cys153, Cys156, Cys159, Cys163, Cys196, Cys199, Cys202, Cys206, Cys270, Cys273, Cys277, and Cys305. 2 consecutive 4Fe-4S ferredoxin-type domains span residues 144 to 171 and 187 to 216; these read PFYR…VNET and EGVP…EKSM. The interval 258–980 is formate dehydrogenase; the sequence is MRETRTKKTK…NRPGYVHLTD (723 aa). Residues 263 to 319 enclose the 4Fe-4S Mo/W bis-MGD-type domain; sequence TKKTKTVCTFCGVGCSFEVWTKGRDILKIQPVSDAPVNAISTCVKGKFGWDFVNSKE. The tract at residues 944 to 980 is disordered; it reads ETAPLPKTNPRNKKRHPQNGVEAERKWNRPGYVHLTD.

It in the C-terminal section; belongs to the prokaryotic molybdopterin-containing oxidoreductase family. Requires [2Fe-2S] cluster as cofactor. [4Fe-4S] cluster serves as cofactor. The cofactor is Mo-bis(molybdopterin guanine dinucleotide).

The catalysed reaction is formate + NAD(+) = CO2 + NADH. The chain is Putative formate dehydrogenase YrhE (yrhE) from Bacillus subtilis (strain 168).